A 441-amino-acid polypeptide reads, in one-letter code: Aminopeptidase C (441 aa).

Catalysis depends on residues Cys70, His361, and Asn382.

The protein belongs to the peptidase C1 family.

The enzyme catalyses Inactivates bleomycin B2 (a cytotoxic glycometallopeptide) by hydrolysis of a carboxyamide bond of beta-aminoalanine, but also shows general aminopeptidase activity. The specificity varies somewhat with source, but amino acid arylamides of Met, Leu and Ala are preferred.. This Listeria monocytogenes serovar 1/2a (strain ATCC BAA-679 / EGD-e) protein is Aminopeptidase C (pepC).